The following is a 583-amino-acid chain: uncharacterized protein (583 aa).

24–140 provides a ligand contact to a nucleoside 3',5'-cyclic phosphate; sequence ILADIDDEQL…SAMLRAMARM (117 aa). In terms of domain architecture, PNPLA spans 309 to 469; the sequence is LVMAGGGARG…LNNLPANVMC (161 aa). The GXGXXG signature appears at 313–318; the sequence is GGGARG. The short motif at 340–344 is the GXSXG element; it reads GTSSG. S342 acts as the Nucleophile in catalysis. The Proton acceptor role is filled by D456. A DGA/G motif is present at residues 456–458; it reads DGG.

This sequence belongs to the NTE family.

This is an uncharacterized protein from Mycobacterium bovis (strain ATCC BAA-935 / AF2122/97).